A 182-amino-acid polypeptide reads, in one-letter code: WUSCHEL-related homeobox 5 (182 aa).

Residues 1-24 are disordered; the sequence is MSFSVKGRSLRGNNNGGTGTKCGR. Residues 20 to 84 constitute a DNA-binding region (homeobox; WUS-type); the sequence is TKCGRWNPTV…NHKARERQKR (65 aa).

It belongs to the WUS homeobox family. As to expression, specifically expressed in the central cells of a quiescent center (QC) of the root.

Its subcellular location is the nucleus. Transcription factor, which may be involved in the specification and maintenance of the stem cells (QC cells) in the root apical meristem (RAM). This chain is WUSCHEL-related homeobox 5 (WOX5), found in Arabidopsis thaliana (Mouse-ear cress).